Reading from the N-terminus, the 470-residue chain is V-type proton ATPase subunit S1 (470 aa).

Positions 1 to 41 (MMAAMATARVRMGPRCAQALWRMPWLPVFLSLAAAAAAAAA) are cleaved as a signal peptide. Positions 42–231 (EQQVPLVLWS…TAVRPSRVAR (190 aa)) are excised as a propeptide. Residues 42 to 419 (EQQVPLVLWS…EQFSYASDCA (378 aa)) are Lumenal-facing. N-linked (GlcNAc...) asparagine glycans are attached at residues Asn170, Asn261, Asn273, Asn296, Asn303, Asn350, and Asn357. A disulfide bond links Cys371 and Cys418. Residues 420 to 440 (SFFSPGIWMGLLTSLFMLFIF) form a helical membrane-spanning segment. The Cytoplasmic portion of the chain corresponds to 441–470 (TYGLHMILSLKTMDRFDDHKGPTISLTQIV). Position 465 is a phosphoserine (Ser465).

This sequence belongs to the vacuolar ATPase subunit S1 family. In terms of assembly, accessory component of the multisubunit proton-transporting vacuolar (V)-ATPase protein pump. Interacts (via N-terminus) with ATP6AP2 (via N-terminus). Interacts with RNASEK. Interacts with TMEM106B (via C-terminus). N-glycosylated. Widely expressed, with highest levels in brain and lowest in liver and duodenum.

It is found in the endoplasmic reticulum membrane. It localises to the endoplasmic reticulum-Golgi intermediate compartment membrane. The protein resides in the cytoplasmic vesicle. The protein localises to the secretory vesicle. Its subcellular location is the synaptic vesicle membrane. It is found in the clathrin-coated vesicle membrane. Its function is as follows. Accessory subunit of the proton-transporting vacuolar (V)-ATPase protein pump, which is required for luminal acidification of secretory vesicles. Guides the V-type ATPase into specialized subcellular compartments, such as neuroendocrine regulated secretory vesicles or the ruffled border of the osteoclast, thereby regulating its activity. Involved in membrane trafficking and Ca(2+)-dependent membrane fusion. May play a role in the assembly of the V-type ATPase complex. In aerobic conditions, involved in intracellular iron homeostasis, thus triggering the activity of Fe(2+) prolyl hydroxylase (PHD) enzymes, and leading to HIF1A hydroxylation and subsequent proteasomal degradation. In islets of Langerhans cells, may regulate the acidification of dense-core secretory granules. The chain is V-type proton ATPase subunit S1 (ATP6AP1) from Homo sapiens (Human).